Here is a 108-residue protein sequence, read N- to C-terminus: Insulin (108 aa).

The first 24 residues, 1–24 (MALWMHLLPLLALLALWGPEPAPA), serve as a signal peptide directing secretion. 3 disulfides stabilise this stretch: Cys31-Cys94, Cys43-Cys107, and Cys93-Cys98. A propeptide spans 57–85 (EAEDLQVGQVELGGGSITGSLPPLEGPMQ) (c peptide).

This sequence belongs to the insulin family. Heterodimer of a B chain and an A chain linked by two disulfide bonds.

It localises to the secreted. Its function is as follows. Insulin decreases blood glucose concentration. It increases cell permeability to monosaccharides, amino acids and fatty acids. It accelerates glycolysis, the pentose phosphate cycle, and glycogen synthesis in liver. This Aotus trivirgatus (Three-striped night monkey) protein is Insulin (INS).